The following is a 531-amino-acid chain: 2,3-bisphosphoglycerate-independent phosphoglycerate mutase (531 aa).

2 residues coordinate Mn(2+): aspartate 15 and serine 65. Serine 65 functions as the Phosphoserine intermediate in the catalytic mechanism. Substrate-binding positions include histidine 126, 155-156 (RD), arginine 187, arginine 193, 257-260 (RPDR), and lysine 330. 5 residues coordinate Mn(2+): aspartate 397, histidine 401, aspartate 438, histidine 439, and histidine 456.

Belongs to the BPG-independent phosphoglycerate mutase family. As to quaternary structure, monomer. The cofactor is Mn(2+).

It carries out the reaction (2R)-2-phosphoglycerate = (2R)-3-phosphoglycerate. It participates in carbohydrate degradation; glycolysis; pyruvate from D-glyceraldehyde 3-phosphate: step 3/5. Functionally, catalyzes the interconversion of 2-phosphoglycerate and 3-phosphoglycerate. The polypeptide is 2,3-bisphosphoglycerate-independent phosphoglycerate mutase (Thermosynechococcus vestitus (strain NIES-2133 / IAM M-273 / BP-1)).